The primary structure comprises 486 residues: Histidine--tRNA ligase, chloroplastic/mitochondrial (486 aa).

The protein belongs to the class-II aminoacyl-tRNA synthetase family.

It localises to the plastid. It is found in the chloroplast. The protein localises to the mitochondrion. The catalysed reaction is tRNA(His) + L-histidine + ATP = L-histidyl-tRNA(His) + AMP + diphosphate + H(+). The sequence is that of Histidine--tRNA ligase, chloroplastic/mitochondrial from Arabidopsis thaliana (Mouse-ear cress).